The sequence spans 635 residues: MNLAVIRLFKHHVNNIPNILPHQLATLDYLVRSIIDENKSVLLFHIMGSGKTIIALLFALVASRFKKVYILVPNINILKIFNYSMDVVINLFNADYILENIFIYSTTSFYSINYNDNVINYNGLSRYNNAIFIIDEAHNIFGNNTGELMTVIKNRNKIPFLLLSGSPITNTPITLSNIISLMSDEEINFSDIIIQGKKVFQILLNEHGVNVLKNILKGRISYYEMPDTDLPGIQYHGKSFLDTRVVYCNMSKLQEKDYINVRKMCNNEMFEKNMNNVSLAVLGQLNLINNLDILFQEQDKELYPNLKINNGVLYGEELVTLNISSKFKYFINKIENLKGKHFIYFSNSTYGGLIIKYIMLSNGYSEYNGSQGTYPKLIHGKPKTFAIVTSKMKASLEDLLVTYNSLANDDGSQIMFLFSSNIMSESYTLKEVRNIWFMTIPDTFSQYNQILGRSIRKFSYKDITQPVNVYLLATVYSDFNDTIESLDDYSLEEINTLPFDIKKLLYLKFKTKETNRIYSILESISDSYTQPPHPHIVEIVLGEIVRQFFYHHSRIKQNDERLLTAVKSVLTNTEAAKKYIKEIVDGHFFVSNKVFDKSLLYAYKDEIITVPFKLSHEPFVWGVNFRKEYNVVSSP.

The region spanning 32–185 is the Helicase ATP-binding domain; the sequence is RSIIDENKSV…SNIISLMSDE (154 aa). An ATP-binding site is contributed by 45–52; sequence HIMGSGKT. Positions 135–138 match the DEXH box motif; that stretch reads DEAH. The region spanning 326 to 505 is the Helicase C-terminal domain; that stretch reads KFKYFINKIE…TLPFDIKKLL (180 aa).

It belongs to the helicase family. VETF subfamily. Heterodimer of a 70 kDa and a 82 kDa subunit. Part of the early transcription complex composed of ETF, RAP94, and the DNA-directed RNA polymerase.

It is found in the virion. Functionally, acts with RNA polymerase to initiate transcription from early gene promoters. Is recruited by the RPO-associated protein of 94 kDa (RAP94) to form the early transcription complex, which also contains the core RNA polymerase. ETF heterodimer binds to early gene promoters. This chain is Early transcription factor 70 kDa subunit (VETFS), found in Oryctolagus cuniculus (Rabbit).